The following is a 295-amino-acid chain: MALGNEINITNKLKRQEIFADIKHEKNKERHTMRRKRAKEERENPELREQRLKENVTQTIENTRVYDETINKEVEGDEDDLMRYFNSNSNEPPKIFLTTNVNAKKSAYEFANILIEILPNVTFVKRKFGYKLKEISDICIKRNFTDIVIINEDKKKVTGLTFIHLPEGPTFYFKLSSFVEVKKIVGHGRPTSHIPELILNNFQTRLGQTVGRLFQSILPQNPDIEGRQVITLHNQRDYIFFRRHRYVFKDNERVGLQELGPQFTLKLKRLQRGIKEETEWEHKPEMDKEKKKFYL.

Positions 24–47 are disordered; that stretch reads HEKNKERHTMRRKRAKEERENPEL. Residues 38 to 47 show a composition bias toward basic and acidic residues; the sequence is AKEERENPEL. Positions 93-276 constitute a Brix domain; the sequence is PKIFLTTNVN…LKRLQRGIKE (184 aa). The segment at 254–271 is RNA-binding; that stretch reads VGLQELGPQFTLKLKRLQ.

In terms of assembly, part of a complex that includes BRX1, RPF1, RPF2 and SSF1 or SSF2.

It is found in the nucleus. The protein localises to the nucleolus. Functionally, essential protein. Required for biogenesis of the 60S ribosomal subunit. The chain is Ribosome production factor 1 (RPF1) from Saccharomyces cerevisiae (strain ATCC 204508 / S288c) (Baker's yeast).